The sequence spans 465 residues: Pleckstrin homology domain-containing family S member 1 (465 aa).

Residues 14–129 (EVCKQDYFIK…WVSFMSSFRQ (116 aa)) form the PH domain. The segment covering 159-173 (PSSTSEAVGSSSPRN) has biased composition (polar residues). 2 disordered regions span residues 159–179 (PSSTSEAVGSSSPRNGLQDKH) and 258–283 (ETSHESVDSSKEEPQTLPETQDGDLH). The span at 258-271 (ETSHESVDSSKEEP) shows a compositional bias: basic and acidic residues.

This is Pleckstrin homology domain-containing family S member 1 from Homo sapiens (Human).